A 507-amino-acid polypeptide reads, in one-letter code: Maturase K (507 aa).

The protein belongs to the intron maturase 2 family. MatK subfamily.

The protein resides in the plastid. It is found in the chloroplast. In terms of biological role, usually encoded in the trnK tRNA gene intron. Probably assists in splicing its own and other chloroplast group II introns. This chain is Maturase K, found in Robinia pseudoacacia (Black locust).